Reading from the N-terminus, the 603-residue chain is Elongation factor 4 (603 aa).

The 183-residue stretch at 6 to 188 (SKIRNFCIIA…QIVKKIPAPT (183 aa)) folds into the tr-type G domain. Residues 18-23 (DHGKST) and 135-138 (NKVD) contribute to the GTP site.

The protein belongs to the TRAFAC class translation factor GTPase superfamily. Classic translation factor GTPase family. LepA subfamily.

It localises to the cell membrane. It catalyses the reaction GTP + H2O = GDP + phosphate + H(+). Its function is as follows. Required for accurate and efficient protein synthesis under certain stress conditions. May act as a fidelity factor of the translation reaction, by catalyzing a one-codon backward translocation of tRNAs on improperly translocated ribosomes. Back-translocation proceeds from a post-translocation (POST) complex to a pre-translocation (PRE) complex, thus giving elongation factor G a second chance to translocate the tRNAs correctly. Binds to ribosomes in a GTP-dependent manner. This Agathobacter rectalis (strain ATCC 33656 / DSM 3377 / JCM 17463 / KCTC 5835 / VPI 0990) (Eubacterium rectale) protein is Elongation factor 4.